Reading from the N-terminus, the 119-residue chain is Large ribosomal subunit protein bL20 (119 aa).

Belongs to the bacterial ribosomal protein bL20 family.

Functionally, binds directly to 23S ribosomal RNA and is necessary for the in vitro assembly process of the 50S ribosomal subunit. It is not involved in the protein synthesizing functions of that subunit. In Granulibacter bethesdensis (strain ATCC BAA-1260 / CGDNIH1), this protein is Large ribosomal subunit protein bL20.